Reading from the N-terminus, the 67-residue chain is DNA-directed RNA polymerase subunit omega (67 aa).

This sequence belongs to the RNA polymerase subunit omega family. In terms of assembly, the RNAP catalytic core consists of 2 alpha, 1 beta, 1 beta' and 1 omega subunit. When a sigma factor is associated with the core the holoenzyme is formed, which can initiate transcription.

It catalyses the reaction RNA(n) + a ribonucleoside 5'-triphosphate = RNA(n+1) + diphosphate. Promotes RNA polymerase assembly. Latches the N- and C-terminal regions of the beta' subunit thereby facilitating its interaction with the beta and alpha subunits. This chain is DNA-directed RNA polymerase subunit omega, found in Acidovorax ebreus (strain TPSY) (Diaphorobacter sp. (strain TPSY)).